The sequence spans 690 residues: MIRARDLLLLALLGFISSALGLKVSSGYHIVHNQPQSSFPNYHGFSYLQGSAPYVIGNSLPTSPAPQNPFSSPASPPVSAYGYSFPTAGRVSCAAPPAVCEKTAYRTLDGSCNHLEQPGLGVANSKYGRLLTPKYADGISAPTRSVTGDELPSARLVSLVAFGEQDVPDPEFTLHNMQWGQIMTHDMSMQAGGTQSKKHPTRCCTDDGRLIGLDTAHKTCFAIIVPPHDPAYSQVGTECLNFVRTLTDRDSNCQYQGGPAEQLTVVTSYLDLSLVYGNSIQQNSDIREFQGGRMIVEERNGAKWLPLSRNVTGDCDAVDASEVCYRSGDVRVNQNPGLAILQTILLREHNRIADALSALNPHYDDRTLFQEARKINIAQYQQISYYEWLPIFLGGENMLKNRLIYKAPSGSYINDFDPNIDPSVLNEHATAAFRYFHSQIEGRLDLLSELRQVLGSLTLSDWFNRPGIIEVGDNFDSLTRGHATQPEELTDINFDRQIKHFLFRRNMPFGSDLRSLDIQRNRDHGLASYNDMREFCGLRRAHSWEGYGDLISPPILEKLKSLYPSHEDVDLTVGASLEAHVAGALAGPTFLCILTEQFYRTRVGDRFFFENGDKLTGFTPDQLEELRKASMARLLCDNGNHISSMQPEAFRTVSHSNPIIPCSNIPQVDLTKWIDQKLYATVDPSHYGKK.

The first 20 residues, Met-1 to Leu-20, serve as a signal peptide directing secretion. Cys-100 and Cys-112 are disulfide-bonded. His-185 (proton acceptor) is an active-site residue. A glycan (N-linked (GlcNAc...) asparagine) is linked at Asn-310. The cysteines at positions 315 and 324 are disulfide-linked. Residue His-437 participates in heme b binding. Cystine bridges form between Cys-536–Cys-592 and Cys-636–Cys-662.

This sequence belongs to the peroxidase family. XPO subfamily. It depends on heme b as a cofactor.

The protein localises to the secreted. The enzyme catalyses 2 a phenolic donor + H2O2 = 2 a phenolic radical donor + 2 H2O. Functionally, involved in the chorion hardening process, through protein cross-linking mediated by the formation of di- and tri-tyrosine bonds. The protein is Peroxidase (Pxd) of Drosophila melanogaster (Fruit fly).